The sequence spans 631 residues: Squalene--hopene cyclase (631 aa).

3 PFTB repeats span residues 15–56 (LDRA…LDRV), 61–102 (MEKI…KYIG), and 241–282 (EIRA…QHPA). The Proton donor role is filled by Asp-376. 4 PFTB repeats span residues 400–441 (MTKG…GEVT), 468–508 (IRRA…KAVG), 516–557 (IQKA…SQTA), and 574–622 (ARRG…LALG).

This sequence belongs to the terpene cyclase/mutase family. In terms of assembly, homodimer.

The protein localises to the cell membrane. The enzyme catalyses squalene = hop-22(29)-ene. It carries out the reaction squalene + H2O = hopan-22-ol. It participates in secondary metabolite biosynthesis; hopanoid biosynthesis. Catalyzes the cyclization of squalene to two pentacyclic triterpenes, hop-22(29)-ene and hopan-22-ol (diplopterol); hopene and hopanol are formed at a constant ratio of 5:1. Is a key enzyme of hopanoid biosynthesis; hopanoids are components of the bacterial cytoplasmic membranes that play a vital role in stabilizing the membranes. The chain is Squalene--hopene cyclase (shc) from Alicyclobacillus acidocaldarius subsp. acidocaldarius (strain ATCC 27009 / DSM 446 / BCRC 14685 / JCM 5260 / KCTC 1825 / NBRC 15652 / NCIMB 11725 / NRRL B-14509 / 104-IA) (Bacillus acidocaldarius).